A 444-amino-acid chain; its full sequence is Spermidine/putrescine import ATP-binding protein PotA (444 aa).

The region spanning 11 to 332 is the ABC transporter domain; that stretch reads ISLVDVDKEF…PVNKWVANFI (322 aa). 43 to 50 is a binding site for ATP; that stretch reads GPSGSGKT. Positions 111-201 are insert; that stretch reads RIKKKAEEIP…ESFKKKYLTR (91 aa).

The protein belongs to the ABC transporter superfamily. Spermidine/putrescine importer (TC 3.A.1.11.1) family. As to quaternary structure, the complex is composed of two ATP-binding proteins (PotA), two transmembrane proteins (PotB and PotC) and a solute-binding protein (PotD).

The protein resides in the cell membrane. The catalysed reaction is ATP + H2O + polyamine-[polyamine-binding protein]Side 1 = ADP + phosphate + polyamineSide 2 + [polyamine-binding protein]Side 1.. Functionally, part of the ABC transporter complex PotABCD involved in spermidine/putrescine import. Responsible for energy coupling to the transport system. The sequence is that of Spermidine/putrescine import ATP-binding protein PotA from Mesomycoplasma hyopneumoniae (strain 232) (Mycoplasma hyopneumoniae).